The primary structure comprises 237 residues: MNIKDIGVIIAKKTLKENTFIITVFTKNHGLYSGVVKEFSKKSKFIYQEGNIIDFLWQARLHEHIGMAKCELIKSYTGYFITNKAKLYAFNSVISLIKELFHEREEHSKFFSFLINYLDNLSKNFCFRDYINFELALLAETGYKLDLTKCGVSHVTTDLIYVSPKSARALSYAVGKPYKDKLLMLPRFLLSDNSEITLEEKRQALALTNYFFNRYLFHNNRQVEARQTFIEYTLNNF.

It belongs to the RecO family.

Involved in DNA repair and RecF pathway recombination. The chain is DNA repair protein RecO from Rickettsia africae (strain ESF-5).